The sequence spans 468 residues: ATP synthase subunit beta (468 aa).

148 to 155 lines the ATP pocket; sequence GGAGVGKT.

It belongs to the ATPase alpha/beta chains family. F-type ATPases have 2 components, CF(1) - the catalytic core - and CF(0) - the membrane proton channel. CF(1) has five subunits: alpha(3), beta(3), gamma(1), delta(1), epsilon(1). CF(0) has three main subunits: a(1), b(2) and c(9-12). The alpha and beta chains form an alternating ring which encloses part of the gamma chain. CF(1) is attached to CF(0) by a central stalk formed by the gamma and epsilon chains, while a peripheral stalk is formed by the delta and b chains.

Its subcellular location is the cell inner membrane. It carries out the reaction ATP + H2O + 4 H(+)(in) = ADP + phosphate + 5 H(+)(out). Functionally, produces ATP from ADP in the presence of a proton gradient across the membrane. The catalytic sites are hosted primarily by the beta subunits. This is ATP synthase subunit beta from Xanthomonas campestris pv. campestris (strain 8004).